We begin with the raw amino-acid sequence, 425 residues long: Proline--tRNA ligase (425 aa).

It belongs to the class-II aminoacyl-tRNA synthetase family. ProS type 2 subfamily. In terms of assembly, homodimer.

The protein resides in the cytoplasm. The catalysed reaction is tRNA(Pro) + L-proline + ATP = L-prolyl-tRNA(Pro) + AMP + diphosphate. In terms of biological role, catalyzes the attachment of proline to tRNA(Pro) in a two-step reaction: proline is first activated by ATP to form Pro-AMP and then transferred to the acceptor end of tRNA(Pro). This chain is Proline--tRNA ligase, found in Wolbachia sp. subsp. Brugia malayi (strain TRS).